Reading from the N-terminus, the 83-residue chain is Small ribosomal subunit protein bS20 (83 aa).

Belongs to the bacterial ribosomal protein bS20 family.

In terms of biological role, binds directly to 16S ribosomal RNA. In Flavobacterium psychrophilum (strain ATCC 49511 / DSM 21280 / CIP 103535 / JIP02/86), this protein is Small ribosomal subunit protein bS20.